The following is a 492-amino-acid chain: Trehalose-6-phosphate synthase (492 aa).

Arg-25 lines the D-glucose 6-phosphate pocket. A UDP-alpha-D-glucose-binding site is contributed by 45-46 (GG). D-glucose 6-phosphate-binding residues include Tyr-101 and Asp-155. Residues Arg-297 and Lys-302 each contribute to the UDP-alpha-D-glucose site. Residue Arg-335 participates in D-glucose 6-phosphate binding. Residue 400–404 (LVAKE) coordinates UDP-alpha-D-glucose.

This sequence belongs to the glycosyltransferase 20 family. In terms of assembly, homotetramer.

It carries out the reaction ADP-alpha-D-glucose + D-glucose 6-phosphate = alpha,alpha-trehalose 6-phosphate + ADP + H(+). The enzyme catalyses CDP-alpha-D-glucose + D-glucose 6-phosphate = alpha,alpha-trehalose 6-phosphate + CDP + H(+). The catalysed reaction is GDP-alpha-D-glucose + D-glucose 6-phosphate = alpha,alpha-trehalose 6-phosphate + GDP + H(+). It catalyses the reaction TDP-alpha-D-glucose + D-glucose 6-phosphate = 5-methyl-UDP + alpha,alpha-trehalose 6-phosphate + H(+). It carries out the reaction D-glucose 6-phosphate + UDP-alpha-D-glucose = alpha,alpha-trehalose 6-phosphate + UDP + H(+). It functions in the pathway glycan biosynthesis; trehalose biosynthesis. Probably involved in the osmoprotection via the biosynthesis of trehalose and in the production of glycogen and alpha-glucan via the TreS-Pep2 branch involved in the biosynthesis of maltose-1-phosphate (M1P). Catalyzes the transfer of glucose from UDP-glucose (UDP-Glc) to D-glucose 6-phosphate (Glc-6-P) to form trehalose-6-phosphate. Probably also able to use ADP-Glc, CDP-Glc, GDP-Glc and TDP-Glc as glucosyl donors. In Mycolicibacterium paratuberculosis (strain ATCC BAA-968 / K-10) (Mycobacterium paratuberculosis), this protein is Trehalose-6-phosphate synthase.